A 359-amino-acid chain; its full sequence is Ras association domain-containing protein 7 (359 aa).

Positions 6–89 constitute a Ras-associating domain; that stretch reads VAMELKVWVD…VQFVLRRTGP (84 aa). The disordered stretch occupies residues 87-123; the sequence is TGPSLSGRPSSDNCPPPERCPVRASLPPKPSAIPGRE. Residues 89–99 show a composition bias toward polar residues; it reads PSLSGRPSSDN. Coiled-coil stretches lie at residues 180–208 and 242–301; these read WEQE…TAEH and AAER…QQFI. The interval 339–359 is disordered; that stretch reads SHILVSSLSPEVPPMRQSSWR.

Interacts with MAP2K7 and GTP-bound NRAS. Polyubiquitinated and degraded by the proteasome upon prolonged stress stimuli.

The protein localises to the cytoplasm. Its subcellular location is the cytoskeleton. It localises to the microtubule organizing center. The protein resides in the centrosome. Its function is as follows. Negatively regulates stress-induced JNK activation and apoptosis by promoting MAP2K7 phosphorylation and inhibiting its ability to activate JNK. Following prolonged stress, anti-apoptotic effect stops because of degradation of RASSF7 protein via the ubiquitin-proteasome pathway. Required for the activation of AURKB and chromosomal congression during mitosis where it stimulates microtubule polymerization. This chain is Ras association domain-containing protein 7 (Rassf7), found in Mus musculus (Mouse).